Consider the following 355-residue polypeptide: 3-isopropylmalate dehydrogenase (355 aa).

78-91 is a binding site for NAD(+); it reads GYKWDNLPRPERPE. Substrate contacts are provided by R98, R136, and D226. Mg(2+)-binding residues include D226, D250, and D254. Residue 284–296 coordinates NAD(+); it reads GSAPDIAGQDKAN.

Belongs to the isocitrate and isopropylmalate dehydrogenases family. LeuB type 1 subfamily. In terms of assembly, homodimer. It depends on Mg(2+) as a cofactor. The cofactor is Mn(2+).

It is found in the cytoplasm. It carries out the reaction (2R,3S)-3-isopropylmalate + NAD(+) = 4-methyl-2-oxopentanoate + CO2 + NADH. It participates in amino-acid biosynthesis; L-leucine biosynthesis; L-leucine from 3-methyl-2-oxobutanoate: step 3/4. Catalyzes the oxidation of 3-carboxy-2-hydroxy-4-methylpentanoate (3-isopropylmalate) to 3-carboxy-4-methyl-2-oxopentanoate. The product decarboxylates to 4-methyl-2 oxopentanoate. The sequence is that of 3-isopropylmalate dehydrogenase (leuB) from Arthrospira platensis (Spirulina platensis).